The following is a 90-amino-acid chain: Nodulation protein F (90 aa).

In terms of domain architecture, Carrier spans 4-89 (QLESEIIGII…RHSGSHPRLA (86 aa)). O-(pantetheine 4'-phosphoryl)serine is present on Ser46. A disordered region spans residues 65 to 90 (RDEHGRGVVGSPERRRHSGSHPRLAH). The segment covering 78–90 (RRRHSGSHPRLAH) has biased composition (basic residues).

In terms of processing, 4'-phosphopantetheine is transferred from CoA to a specific serine of apo-NodF.

Functionally, proposed to synthesize nod factor fatty acyl chain. Involved in trans-2,trans-4,trans-6,cis-11-octadecatetraenoic acid biosynthesis. This chain is Nodulation protein F (nodF), found in Rhizobium meliloti (Ensifer meliloti).